A 155-amino-acid polypeptide reads, in one-letter code: Small ribosomal subunit protein uS7cz/uS7cy (155 aa).

Belongs to the universal ribosomal protein uS7 family. Part of the 30S ribosomal subunit.

It is found in the plastid. The protein resides in the chloroplast. Functionally, one of the primary rRNA binding proteins, it binds directly to 16S rRNA where it nucleates assembly of the head domain of the 30S subunit. This is Small ribosomal subunit protein uS7cz/uS7cy (rps7-A) from Lactuca sativa (Garden lettuce).